We begin with the raw amino-acid sequence, 628 residues long: MASNPGSDAALGTQNPLLSGSPRTKKFPLTEQEVFYMNCRAAYLTIFKSSLENIISKDQLYLALQHAGRNPSQKTINKYWTPQTAKLNFDDFCIILSKEKPTSKAELLKSFKKLDVNDDGAILHSDLQKYLTKRGEKMTQEEVNAVINLADINANGKFDYVKFCKLYMTTSEQCLKTTLERLEADSKLRRQQFGSHMEGSPERGPSPAPKPSPRVIRKNDQETFSSKGDTSHALLSTTRKFKTSVSFTMTMSANSNQDSTLTEPNLKDWQCAQSKGCFFLEEDGEVVSHQYKMHIAQRSVLYLTIKPLYLSQVEGKRCPWLSVDTALYILKKNENPAEPQLMCFTELRNREVFGWTGELEAGIYWLIPSTTGCRLKKETKPVTEEAQLVHRDETGELSLTSEFRSTLSEIFEVIDLDGNGLISLEEYNFFELRTSGEKCDEDAWAVCRENFDTKKNELTRQGFMDLHLMEANDREGDPLDLWVTLHSMGYNKALELTEACPFVINIYAERCKPRIKVVHMEACSGQLEKAICKSVLDRSDAKVMDGYENIIVHTCNYDTWITSIIENKSDNKVIIHINNELSKNCVNNRGLNIFAVEVAPRSTMVCQHVMPLNEQEEWIYCCVYSLVA.

Residues 1–22 (MASNPGSDAALGTQNPLLSGSP) are compositionally biased toward polar residues. Residues 1 to 24 (MASNPGSDAALGTQNPLLSGSPRT) form a disordered region. EF-hand domains follow at residues 102–137 (TSKAELLKSFKKLDVNDDGAILHSDLQKYLTKRGEK) and 138–173 (MTQEEVNAVINLADINANGKFDYVKFCKLYMTTSEQ). The disordered stretch occupies residues 192–231 (QFGSHMEGSPERGPSPAPKPSPRVIRKNDQETFSSKGDTS). Phosphoserine is present on residues serine 200 and serine 212. The segment covering 222–231 (ETFSSKGDTS) has biased composition (polar residues). The EF-hand 3 domain occupies 402–437 (EFRSTLSEIFEVIDLDGNGLISLEEYNFFELRTSGE). Ca(2+) contacts are provided by aspartate 415, aspartate 417, asparagine 419, and glutamate 426.

As to quaternary structure, component of the EvC complex composed of EFCAB7, IQCE, EVC2 and EVC; built from two subcomplexes, EVC2:EVC and EFCAB7:IQCE. Interacts (via EF-hand 1 and 2) with IQCE (via N-terminus); this interaction anchors the EVC-EVC2 complex in a signaling microdomain at the base of cilia and stimulates the Hedgehog (Hh) pathway. Interacts with EVC2 (via N-terminal end). Interacts with EVC.

The protein resides in the cell projection. It localises to the cilium membrane. In terms of biological role, component of the EvC complex that positively regulates ciliary Hedgehog (Hh) signaling. Required for the localization of the EVC2:EVC subcomplex at the base of primary cilia. This chain is EF-hand calcium-binding domain-containing protein 7 (Efcab7), found in Mus musculus (Mouse).